Consider the following 130-residue polypeptide: Small ribosomal subunit protein uS9 (130 aa).

The tract at residues 98 to 130 (LKRAGFLTRDARKKERKKYGQPGARKRFQYSKR) is disordered. A compositionally biased stretch (basic residues) spans 111 to 130 (KERKKYGQPGARKRFQYSKR).

Belongs to the universal ribosomal protein uS9 family.

The chain is Small ribosomal subunit protein uS9 from Sorangium cellulosum (strain So ce56) (Polyangium cellulosum (strain So ce56)).